The sequence spans 646 residues: Acetyl-coenzyme A synthetase (646 aa).

CoA is bound by residues 190–193 (RAGN) and threonine 309. Residues 385–387 (GEP), 409–414 (DTWWQT), aspartate 498, and arginine 513 each bind ATP. Serine 521 is a binding site for CoA. Residue arginine 524 coordinates ATP. Residues valine 535, histidine 537, and valine 540 each contribute to the Mg(2+) site. Arginine 582 contacts CoA. Residue lysine 607 is modified to N6-acetyllysine.

The protein belongs to the ATP-dependent AMP-binding enzyme family. It depends on Mg(2+) as a cofactor. In terms of processing, acetylated. Deacetylation by the SIR2-homolog deacetylase activates the enzyme.

It catalyses the reaction acetate + ATP + CoA = acetyl-CoA + AMP + diphosphate. Its function is as follows. Catalyzes the conversion of acetate into acetyl-CoA (AcCoA), an essential intermediate at the junction of anabolic and catabolic pathways. AcsA undergoes a two-step reaction. In the first half reaction, AcsA combines acetate with ATP to form acetyl-adenylate (AcAMP) intermediate. In the second half reaction, it can then transfer the acetyl group from AcAMP to the sulfhydryl group of CoA, forming the product AcCoA. This chain is Acetyl-coenzyme A synthetase, found in Pseudoalteromonas translucida (strain TAC 125).